We begin with the raw amino-acid sequence, 219 residues long: Orotate phosphoribosyltransferase (219 aa).

Lys26 contacts 5-phospho-alpha-D-ribose 1-diphosphate. An orotate-binding site is contributed by 34–35 (FF). Residues 72–73 (YK), Arg98, Lys99, Lys102, His104, and 124–132 (DDVITAGTA) contribute to the 5-phospho-alpha-D-ribose 1-diphosphate site. The orotate site is built by Thr128 and Arg156.

Belongs to the purine/pyrimidine phosphoribosyltransferase family. PyrE subfamily. Homodimer. Requires Mg(2+) as cofactor.

It carries out the reaction orotidine 5'-phosphate + diphosphate = orotate + 5-phospho-alpha-D-ribose 1-diphosphate. It functions in the pathway pyrimidine metabolism; UMP biosynthesis via de novo pathway; UMP from orotate: step 1/2. Functionally, catalyzes the transfer of a ribosyl phosphate group from 5-phosphoribose 1-diphosphate to orotate, leading to the formation of orotidine monophosphate (OMP). The chain is Orotate phosphoribosyltransferase from Stenotrophomonas maltophilia (strain R551-3).